Here is a 140-residue protein sequence, read N- to C-terminus: uncharacterized protein (140 aa).

14 repeat units span residues 1-10, 11-20, 21-30, 31-40, 41-50, 51-60, 61-70, 71-80, 81-90, 91-100, 101-110, 111-120, 121-130, and 131-140. The interval 1 to 140 is 14 X 10 AA tandem repeats of [MT]-F-[AG]-R-L-[CS]-P-V-[SI]-[ET]; the sequence is MFARLCPVSE…MFGRLCPVIT (140 aa).

This is an uncharacterized protein from Homo sapiens (Human).